A 153-amino-acid chain; its full sequence is Insulin-like growth factor 1 (153 aa).

Residues 49–77 (GPETLCGAELVDALQFVCGDRGFYFSKPT) form a b region. Disulfide bonds link Cys54–Cys96, Cys66–Cys109, and Cys95–Cys100. Residues 78–89 (GYGSSSRRLHHK) form a c region. The segment at 90–110 (GIVDECCFQSCDLRRLEMYCA) is a. The d stretch occupies residues 111 to 118 (PIKPPKSA). Positions 119–153 (RSVRAQRHTDMPKAQKEVHLKNTSRGNTGNRNYRM) are cleaved as a propeptide — e peptide. Residues 119–153 (RSVRAQRHTDMPKAQKEVHLKNTSRGNTGNRNYRM) form a disordered region. Over residues 125 to 138 (RHTDMPKAQKEVHL) the composition is skewed to basic and acidic residues. The segment covering 139 to 153 (KNTSRGNTGNRNYRM) has biased composition (polar residues).

It belongs to the insulin family. As to quaternary structure, forms a ternary complex with IGFR1 and ITGAV:ITGB3. Forms a ternary complex with IGFR1 and ITGA6:ITGB4. Forms a ternary complex with IGFBP3 and ALS.

It is found in the secreted. Its function is as follows. The insulin-like growth factors, isolated from plasma, are structurally and functionally related to insulin but have a much higher growth-promoting activity. Acts as a ligand for IGF1R. Binds to the alpha subunit of IGF1R, leading to the activation of the intrinsic tyrosine kinase activity which autophosphorylates tyrosine residues in the beta subunit thus initiatiating a cascade of down-stream signaling events leading to activation of the PI3K-AKT/PKB and the Ras-MAPK pathways. Binds to integrins. Its binding to integrins and subsequent ternary complex formation with integrins and IGFR1 are essential for IGF1 signaling. The sequence is that of Insulin-like growth factor 1 from Gallus gallus (Chicken).